A 238-amino-acid chain; its full sequence is uncharacterized protein (238 aa).

Belongs to the chlamydial CPn_0658/CT_538/TC_0825 family.

This is an uncharacterized protein from Chlamydia muridarum (strain MoPn / Nigg).